Consider the following 39-residue polypeptide: Photosystem II reaction center protein I (39 aa).

A helical membrane pass occupies residues 6–26 (ISVYSVVFFFIGIFMFGFLAS).

This sequence belongs to the PsbI family. As to quaternary structure, PSII is composed of 1 copy each of membrane proteins PsbA, PsbB, PsbC, PsbD, PsbE, PsbF, PsbH, PsbI, PsbJ, PsbK, PsbL, PsbM, PsbT, PsbX, PsbY, PsbZ, Psb30/Ycf12, peripheral proteins PsbO, CyanoQ (PsbQ), PsbU, PsbV and a large number of cofactors. It forms dimeric complexes.

The protein resides in the cellular thylakoid membrane. Its function is as follows. One of the components of the core complex of photosystem II (PSII), required for its stability and/or assembly. PSII is a light-driven water:plastoquinone oxidoreductase that uses light energy to abstract electrons from H(2)O, generating O(2) and a proton gradient subsequently used for ATP formation. It consists of a core antenna complex that captures photons, and an electron transfer chain that converts photonic excitation into a charge separation. This is Photosystem II reaction center protein I from Synechococcus sp. (strain RCC307).